An 801-amino-acid polypeptide reads, in one-letter code: Protocadherin beta-8 (801 aa).

An N-terminal signal peptide occupies residues 1–29 (MEASGKLICRQRQVLFSFLLLGLSLAGAA). Residues 30-691 (EPRSYSVVEE…GQADSLTVYL (662 aa)) lie on the Extracellular side of the membrane. Cadherin domains are found at residues 36–134 (VVEE…SPVF), 139–243 (MLVK…APEF), 248–348 (YRVQ…APEV), 353–452 (FTSP…APAF), and 457–562 (YTLF…SPFV). Residues cysteine 97 and cysteine 103 are joined by a disulfide bond. 2 N-linked (GlcNAc...) asparagine glycosylation sites follow: asparagine 419 and asparagine 437. A glycan (N-linked (GlcNAc...) asparagine) is linked at asparagine 568. A Cadherin 6 domain is found at 569-672 (SSAPCTELVP…LVDGFSQPYL (104 aa)). Residues 692 to 710 (VVALASVSSLFLFSVLLFV) traverse the membrane as a helical segment. At 711–801 (AVRLCRRSRA…NGFGFSLQLK (91 aa)) the chain is on the cytoplasmic side.

In terms of assembly, forms homodimers in trans (molecules expressed by two different cells). Forms promiscuous heterodimers in cis (at the plasma membrane of the same cell) with other protocadherins.

It is found in the cell membrane. In terms of biological role, calcium-dependent cell-adhesion protein involved in cells self-recognition and non-self discrimination. Thereby, it is involved in the establishment and maintenance of specific neuronal connections in the brain. The protein is Protocadherin beta-8 of Pan troglodytes (Chimpanzee).